Here is a 115-residue protein sequence, read N- to C-terminus: Waprin-like protein (115 aa).

A signal peptide spans 1–21 (MNRSLLAFAIVLVLLVAGTSS). Residues 23 to 69 (LFNKSGNCPMRNTVTSCTPRCIGDGECSSNQKCCPNKCGTTSCANSS) form the WAP domain. Intrachain disulfides connect cysteine 30-cysteine 56, cysteine 39-cysteine 60, cysteine 43-cysteine 55, and cysteine 49-cysteine 65.

This sequence belongs to the venom waprin family. Cys-rich waprin subfamily. As to expression, expressed by the venom gland.

It localises to the secreted. Its function is as follows. Antimicrobial peptides with activity against Gram-positive and Gram-negative bacteria as well as fungi. Recognizes carbohydrates in the microbial cell walls, and induces structural damage to them. Also inhibits microbial serine proteases, as well as mammalian elastases. Carbohydrates that are recognized are LPS, mannan, peptidoglycan, and N-acetl-D-glucosamine. This chain is Waprin-like protein, found in Tetramorium bicarinatum (Tramp ant).